A 506-amino-acid chain; its full sequence is Putative transporter SVOPL (506 aa).

10 helical membrane-spanning segments follow: residues 57-77, 104-124, 133-153, 190-210, 220-240, 297-317, 362-382, 397-417, 444-464, and 472-492; these read SIGF…ANIV, ALVS…CGYI, VVFG…FSTS, LLPL…VLGM, WMIR…MFIP, TSLL…GSVL, LISC…LNIV, FFFM…LLFL, IGMG…PFIA, and VILA…GVFF.

The protein belongs to the major facilitator superfamily.

The protein localises to the membrane. The sequence is that of Putative transporter SVOPL (svopl) from Danio rerio (Zebrafish).